The following is a 377-amino-acid chain: Ipis-1 (377 aa).

N-linked (GlcNAc...) asparagine glycans are attached at residues Asn-11 and Asn-226.

The protein belongs to the serpin family. Female salivary gland. Not detected in midgut and other tissues.

The protein localises to the secreted. Salivary protein with immunosuppressive properties that can modulate blood feeding of ticks on vertebrate species. Inhibits proliferation of bovine peripheral blood mononuclear cells (PBMCs). Inhibits IFN-gamma (IFNG) production by bovine PBMCs. The protein is Ipis-1 of Ixodes persulcatus (Taiga tick).